The primary structure comprises 557 residues: Dihydroxy-acid dehydratase (557 aa).

C50 lines the [2Fe-2S] cluster pocket. D82 contributes to the Mg(2+) binding site. C123 is a [2Fe-2S] cluster binding site. 2 residues coordinate Mg(2+): D124 and K125. N6-carboxylysine is present on K125. C195 contributes to the [2Fe-2S] cluster binding site. E447 contacts Mg(2+). S473 (proton acceptor) is an active-site residue.

Belongs to the IlvD/Edd family. Homodimer. [2Fe-2S] cluster serves as cofactor. The cofactor is Mg(2+).

The enzyme catalyses (2R)-2,3-dihydroxy-3-methylbutanoate = 3-methyl-2-oxobutanoate + H2O. The catalysed reaction is (2R,3R)-2,3-dihydroxy-3-methylpentanoate = (S)-3-methyl-2-oxopentanoate + H2O. Its pathway is amino-acid biosynthesis; L-isoleucine biosynthesis; L-isoleucine from 2-oxobutanoate: step 3/4. The protein operates within amino-acid biosynthesis; L-valine biosynthesis; L-valine from pyruvate: step 3/4. In terms of biological role, functions in the biosynthesis of branched-chain amino acids. Catalyzes the dehydration of (2R,3R)-2,3-dihydroxy-3-methylpentanoate (2,3-dihydroxy-3-methylvalerate) into 2-oxo-3-methylpentanoate (2-oxo-3-methylvalerate) and of (2R)-2,3-dihydroxy-3-methylbutanoate (2,3-dihydroxyisovalerate) into 2-oxo-3-methylbutanoate (2-oxoisovalerate), the penultimate precursor to L-isoleucine and L-valine, respectively. The polypeptide is Dihydroxy-acid dehydratase (Ralstonia nicotianae (strain ATCC BAA-1114 / GMI1000) (Ralstonia solanacearum)).